Reading from the N-terminus, the 267-residue chain is Fibroin light chain (267 aa).

Positions 1-16 (MLPFVLVLLVATSALA) are cleaved as a signal peptide. Serine 19 is modified (N-acetylserine; in short form). Cysteine 103 and cysteine 162 are oxidised to a cystine.

Silk fibroin elementary unit consists in a disulfide-linked heavy and light chain and a p25 glycoprotein in molar ratios of 6:6:1. This results in a complex of approximately 2.3 MDa. Partially N-terminally processed to yield a short form which lacks the first two residues of the long form. Post-translationally, the interchain disulfide bridge is essential for the intracellular transport and secretion of fibroin. As to expression, produced exclusively in the posterior (PSG) section of silk glands, which are essentially modified salivary glands.

Its subcellular location is the secreted. It is likely that the major role of L-chain is to prevent the retention of H-chain in ER by forming the disulfide linkage. This is Fibroin light chain (FIBL) from Galleria mellonella (Greater wax moth).